We begin with the raw amino-acid sequence, 165 residues long: Thiol peroxidase (165 aa).

A Thioredoxin domain is found at 18 to 164 (RKVGDKAPNF…YEAAIEAAKK (147 aa)). Cys-60 serves as the catalytic Cysteine sulfenic acid (-SOH) intermediate. Cys-60 and Cys-94 are joined by a disulfide.

Belongs to the peroxiredoxin family. Tpx subfamily. As to quaternary structure, homodimer.

The enzyme catalyses a hydroperoxide + [thioredoxin]-dithiol = an alcohol + [thioredoxin]-disulfide + H2O. Thiol-specific peroxidase that catalyzes the reduction of hydrogen peroxide and organic hydroperoxides to water and alcohols, respectively. Plays a role in cell protection against oxidative stress by detoxifying peroxides. The sequence is that of Thiol peroxidase from Listeria innocua serovar 6a (strain ATCC BAA-680 / CLIP 11262).